A 75-amino-acid polypeptide reads, in one-letter code: Small ribosomal subunit protein bS18 (75 aa).

Belongs to the bacterial ribosomal protein bS18 family. Part of the 30S ribosomal subunit. Forms a tight heterodimer with protein bS6.

Functionally, binds as a heterodimer with protein bS6 to the central domain of the 16S rRNA, where it helps stabilize the platform of the 30S subunit. This Thermotoga maritima (strain ATCC 43589 / DSM 3109 / JCM 10099 / NBRC 100826 / MSB8) protein is Small ribosomal subunit protein bS18.